Reading from the N-terminus, the 235-residue chain is 2-C-methyl-D-erythritol 4-phosphate cytidylyltransferase (235 aa).

Belongs to the IspD/TarI cytidylyltransferase family. IspD subfamily.

The enzyme catalyses 2-C-methyl-D-erythritol 4-phosphate + CTP + H(+) = 4-CDP-2-C-methyl-D-erythritol + diphosphate. Its pathway is isoprenoid biosynthesis; isopentenyl diphosphate biosynthesis via DXP pathway; isopentenyl diphosphate from 1-deoxy-D-xylulose 5-phosphate: step 2/6. In terms of biological role, catalyzes the formation of 4-diphosphocytidyl-2-C-methyl-D-erythritol from CTP and 2-C-methyl-D-erythritol 4-phosphate (MEP). The chain is 2-C-methyl-D-erythritol 4-phosphate cytidylyltransferase from Pseudomonas putida (strain ATCC 47054 / DSM 6125 / CFBP 8728 / NCIMB 11950 / KT2440).